The following is a 128-amino-acid chain: Profilin (128 aa).

The protein belongs to the profilin family.

More likely to influence phosphoinositide metabolism than actin assembly. The chain is Profilin from Homo sapiens (Human).